The sequence spans 155 residues: 2-C-methyl-D-erythritol 2,4-cyclodiphosphate synthase (155 aa).

Asp8 and His10 together coordinate a divalent metal cation. 4-CDP-2-C-methyl-D-erythritol 2-phosphate-binding positions include 8 to 10 and 34 to 35; these read DVH and HS. An a divalent metal cation-binding site is contributed by His42. Residues 56–58, 61–65, 132–135, Phe139, and Arg142 contribute to the 4-CDP-2-C-methyl-D-erythritol 2-phosphate site; these read DIG, FPDSD, and TTEE.

It belongs to the IspF family. In terms of assembly, homotrimer. The cofactor is a divalent metal cation.

It carries out the reaction 4-CDP-2-C-methyl-D-erythritol 2-phosphate = 2-C-methyl-D-erythritol 2,4-cyclic diphosphate + CMP. The protein operates within isoprenoid biosynthesis; isopentenyl diphosphate biosynthesis via DXP pathway; isopentenyl diphosphate from 1-deoxy-D-xylulose 5-phosphate: step 4/6. Its function is as follows. Involved in the biosynthesis of isopentenyl diphosphate (IPP) and dimethylallyl diphosphate (DMAPP), two major building blocks of isoprenoid compounds. Catalyzes the conversion of 4-diphosphocytidyl-2-C-methyl-D-erythritol 2-phosphate (CDP-ME2P) to 2-C-methyl-D-erythritol 2,4-cyclodiphosphate (ME-CPP) with a corresponding release of cytidine 5-monophosphate (CMP). The chain is 2-C-methyl-D-erythritol 2,4-cyclodiphosphate synthase from Clostridium acetobutylicum (strain ATCC 824 / DSM 792 / JCM 1419 / IAM 19013 / LMG 5710 / NBRC 13948 / NRRL B-527 / VKM B-1787 / 2291 / W).